A 231-amino-acid chain; its full sequence is 5'-methylthioadenosine/S-adenosylhomocysteine nucleosidase (231 aa).

Catalysis depends on Glu-12, which acts as the Proton acceptor. Residues Gly-78, Val-153, and 174 to 175 each bind substrate; that span reads ME. The active-site Proton donor is the Asp-198.

This sequence belongs to the PNP/UDP phosphorylase family. MtnN subfamily.

It carries out the reaction S-adenosyl-L-homocysteine + H2O = S-(5-deoxy-D-ribos-5-yl)-L-homocysteine + adenine. The enzyme catalyses S-methyl-5'-thioadenosine + H2O = 5-(methylsulfanyl)-D-ribose + adenine. It catalyses the reaction 5'-deoxyadenosine + H2O = 5-deoxy-D-ribose + adenine. The protein operates within amino-acid biosynthesis; L-methionine biosynthesis via salvage pathway; S-methyl-5-thio-alpha-D-ribose 1-phosphate from S-methyl-5'-thioadenosine (hydrolase route): step 1/2. In terms of biological role, catalyzes the irreversible cleavage of the glycosidic bond in both 5'-methylthioadenosine (MTA) and S-adenosylhomocysteine (SAH/AdoHcy) to adenine and the corresponding thioribose, 5'-methylthioribose and S-ribosylhomocysteine, respectively. Also cleaves 5'-deoxyadenosine, a toxic by-product of radical S-adenosylmethionine (SAM) enzymes, into 5-deoxyribose and adenine. The sequence is that of 5'-methylthioadenosine/S-adenosylhomocysteine nucleosidase from Aliivibrio fischeri (strain MJ11) (Vibrio fischeri).